The following is a 54-amino-acid chain: UPF0391 membrane protein BAB1_1670 (54 aa).

The next 2 helical transmembrane spans lie at 5-25 (VLVF…GIAG) and 29-48 (GIAQ…SLIA).

Belongs to the UPF0391 family.

It is found in the cell membrane. This Brucella abortus (strain 2308) protein is UPF0391 membrane protein BAB1_1670.